We begin with the raw amino-acid sequence, 503 residues long: Catalase (503 aa).

The signal sequence occupies residues 1–21 (MHMSKSFLIISMGFVAVSVQA). Catalysis depends on residues histidine 72 and asparagine 145. Tyrosine 353 is a binding site for heme.

The protein belongs to the catalase family. Heme serves as cofactor.

It localises to the periplasm. The catalysed reaction is 2 H2O2 = O2 + 2 H2O. Functionally, decomposes hydrogen peroxide into water and oxygen; serves to protect cells from the toxic effects of hydrogen peroxide. The chain is Catalase from Vibrio cholerae serotype O1 (strain ATCC 39315 / El Tor Inaba N16961).